The primary structure comprises 115 residues: Probable mycobacterial cidal antitoxin Rv3188 (115 aa).

Belongs to the MbcA/ParS/Xre antitoxin family. As to quaternary structure, forms a heterotetramer with cognate toxin Rv3189.

Functionally, probable antitoxin component of a type II toxin-antitoxin (TA) system. Neutralizes the activity of cognate toxin Rv3189 by blocking access to the toxin active site. The chain is Probable mycobacterial cidal antitoxin Rv3188 from Mycobacterium tuberculosis (strain ATCC 25618 / H37Rv).